The chain runs to 170 residues: Protein ripply3 (170 aa).

Residues 40–43 (WRPW) carry the WRPW motif motif. The tract at residues 79-114 (HPVRLYMPKSKTSEYLQHMGKKVLANFPVQATIHFY) is ripply homology domain. Over residues 143 to 152 (VNSSRGSGDN) the composition is skewed to polar residues. The segment at 143–170 (VNSSRGSGDNYSVPGGPKRNISSHTGSA) is disordered.

The protein belongs to the ripply family. As to quaternary structure, interacts with tbx1 and tle4/grg4.

The protein localises to the nucleus. Its function is as follows. Acts as a transcriptional corepressor. Negative regulator of the transcriptional activity of tbx1 that plays a key role in pharyngeal development. Plays a role in the formation of the anteroposterior (AP) axis during embryonic development; required to establish the posterolateral border of the pre-placodal ectoderm (PPE) acting downstream of the retinoic acid receptor (RAR) signaling. This is Protein ripply3 from Xenopus tropicalis (Western clawed frog).